We begin with the raw amino-acid sequence, 77 residues long: Acyl carrier protein (77 aa).

In terms of domain architecture, Carrier spans 2–77; it reads SSIDKRIKEI…DAIDYITDHT (76 aa). Serine 37 is modified (O-(pantetheine 4'-phosphoryl)serine).

Belongs to the acyl carrier protein (ACP) family. In terms of processing, 4'-phosphopantetheine is transferred from CoA to a specific serine of apo-ACP by AcpS. This modification is essential for activity because fatty acids are bound in thioester linkage to the sulfhydryl of the prosthetic group.

Its subcellular location is the cytoplasm. The protein operates within lipid metabolism; fatty acid biosynthesis. In terms of biological role, carrier of the growing fatty acid chain in fatty acid biosynthesis. In Geotalea uraniireducens (strain Rf4) (Geobacter uraniireducens), this protein is Acyl carrier protein.